Consider the following 276-residue polypeptide: Small ribosomal subunit protein uS2 (276 aa).

Residues 251–276 (AEEAPAAAEEAPAAEPAAEETPAAEA) are disordered. A compositionally biased stretch (low complexity) spans 252-276 (EEAPAAAEEAPAAEPAAEETPAAEA).

This sequence belongs to the universal ribosomal protein uS2 family.

The sequence is that of Small ribosomal subunit protein uS2 from Jannaschia sp. (strain CCS1).